Consider the following 137-residue polypeptide: MPTINQLVRKPRQSKSKKSDSPALNRNFNSKKKKFTDLNSPQKRGVCTRVGTMTPKKPNSALRKYARVRLSNNIEINAYIPGIGHNLQEHSVVLVRGGRVKDLPGVRYHIVRGALDTSGVDGRRQGRSLYGTKKPKK.

A disordered region spans residues 1–55 (MPTINQLVRKPRQSKSKKSDSPALNRNFNSKKKKFTDLNSPQKRGVCTRVGTMTP). Aspartate 102 carries the 3-methylthioaspartic acid modification. Residues 118–137 (SGVDGRRQGRSLYGTKKPKK) form a disordered region.

It belongs to the universal ribosomal protein uS12 family. As to quaternary structure, part of the 30S ribosomal subunit. Contacts proteins S8 and S17. May interact with IF1 in the 30S initiation complex.

With S4 and S5 plays an important role in translational accuracy. In terms of biological role, interacts with and stabilizes bases of the 16S rRNA that are involved in tRNA selection in the A site and with the mRNA backbone. Located at the interface of the 30S and 50S subunits, it traverses the body of the 30S subunit contacting proteins on the other side and probably holding the rRNA structure together. The combined cluster of proteins S8, S12 and S17 appears to hold together the shoulder and platform of the 30S subunit. This is Small ribosomal subunit protein uS12 from Staphylococcus saprophyticus subsp. saprophyticus (strain ATCC 15305 / DSM 20229 / NCIMB 8711 / NCTC 7292 / S-41).